The sequence spans 62 residues: Trypsin inhibitor MCI-3 (62 aa).

Belongs to the protease inhibitor I13 (potato type I serine protease inhibitor) family.

This chain is Trypsin inhibitor MCI-3, found in Momordica charantia (Bitter gourd).